The primary structure comprises 220 residues: RPA-interacting protein B (220 aa).

Residues 1 to 45 form an interaction with importin beta region; it reads MEAERRHRALYKGTTPPWKETYRKRCVERLKSNRSKLLDKFRQVG. The tract at residues 49–165 is interaction with RPA1; sequence HGGVGGSFLV…QCGVYINTQS (117 aa). The segment at 138–213 adopts an RIP-type zinc-finger fold; sequence CPVCNRNYLT…ASLFMSCQEC (76 aa).

Interacts directly with the RPA1 subunit of RPA complex. Interacts with importin beta, but not with importin alpha. Forms a complex with the RPA complex and importin beta, which is dissociated by Ran-GTP.

It localises to the nucleus. Its function is as follows. Mediates the import of RPA complex into the nucleus, via its interaction with importin beta. The chain is RPA-interacting protein B (rpain-b) from Xenopus laevis (African clawed frog).